The sequence spans 721 residues: Cytosolic carboxypeptidase 2 (721 aa).

Positions 43–71 (TASDMINSSSPSESSDSNLEEEQEESKPC) are disordered. Residues 50–59 (SSSPSESSDS) show a composition bias toward low complexity. The Peptidase M14 domain maps to 334-605 (YPYTYSKLQH…CFCDTLLDFC (272 aa)). Residues histidine 400, glutamate 403, and histidine 496 each coordinate Zn(2+). The Proton donor/acceptor role is filled by glutamate 569. The disordered stretch occupies residues 645–721 (DIESSTSGSN…TQHGDTEDQS (77 aa)). Over residues 647–660 (ESSTSGSNSTESDG) the composition is skewed to low complexity. The segment covering 672–688 (GKKKLLRSRKERNRLRQ) has biased composition (basic residues). Polar residues predominate over residues 703-714 (YSCQTLNATTQH).

It belongs to the peptidase M14 family. The cofactor is Zn(2+).

The protein localises to the cytoplasm. It localises to the cytosol. It is found in the cytoskeleton. Its subcellular location is the microtubule organizing center. The protein resides in the centrosome. The protein localises to the centriole. It localises to the cilium basal body. It carries out the reaction (L-glutamyl)(n+1)-gamma-L-glutamyl-L-glutamyl-[protein] + H2O = (L-glutamyl)(n)-gamma-L-glutamyl-L-glutamyl-[protein] + L-glutamate. Its function is as follows. Metallocarboxypeptidase that mediates deglutamylation of target proteins. Catalyzes the deglutamylation of polyglutamate side chains generated by post-translational polyglutamylation in proteins such as tubulins. Also removes gene-encoded polyglutamates from the carboxy-terminus of target proteins such as MYLK. Does not show detyrosinase or deglycylase activities from the carboxy-terminus of tubulin. In terms of biological role, metallocarboxypeptidase that mediates deglutamylation of tubulin and non-tubulin target proteins. Catalyzes the removal of polyglutamate side chains present on the gamma-carboxyl group of glutamate residues within the C-terminal tail of tubulin protein. Specifically cleaves tubulin long-side-chains, while it is not able to remove the branching point glutamate. Also catalyzes the removal of polyglutamate residues from the carboxy-terminus of non-tubulin proteins. The polypeptide is Cytosolic carboxypeptidase 2 (zte25) (Danio rerio (Zebrafish)).